The sequence spans 426 residues: Glutamate-1-semialdehyde 2,1-aminomutase (426 aa).

Lys265 carries the post-translational modification N6-(pyridoxal phosphate)lysine.

Belongs to the class-III pyridoxal-phosphate-dependent aminotransferase family. HemL subfamily. In terms of assembly, homodimer. The cofactor is pyridoxal 5'-phosphate.

The protein resides in the cytoplasm. The catalysed reaction is (S)-4-amino-5-oxopentanoate = 5-aminolevulinate. The protein operates within porphyrin-containing compound metabolism; protoporphyrin-IX biosynthesis; 5-aminolevulinate from L-glutamyl-tRNA(Glu): step 2/2. This is Glutamate-1-semialdehyde 2,1-aminomutase from Paraburkholderia phymatum (strain DSM 17167 / CIP 108236 / LMG 21445 / STM815) (Burkholderia phymatum).